The following is a 100-amino-acid chain: Urease subunit gamma (100 aa).

This sequence belongs to the urease gamma subunit family. In terms of assembly, heterotrimer of UreA (gamma), UreB (beta) and UreC (alpha) subunits. Three heterotrimers associate to form the active enzyme.

The protein resides in the cytoplasm. It carries out the reaction urea + 2 H2O + H(+) = hydrogencarbonate + 2 NH4(+). It functions in the pathway nitrogen metabolism; urea degradation; CO(2) and NH(3) from urea (urease route): step 1/1. The chain is Urease subunit gamma from Yersinia bercovieri.